A 447-amino-acid chain; its full sequence is Vasoactive intestinal polypeptide receptor (447 aa).

Residues 1–103 are Extracellular-facing; the sequence is MCDVVNEIEL…VDDDSFFRSV (103 aa). Intrachain disulfides connect Cys-15–Cys-36, Cys-27–Cys-69, and Cys-50–Cys-86. N-linked (GlcNAc...) asparagine glycans are attached at residues Asn-17, Asn-22, Asn-64, and Asn-91. The helical transmembrane segment at 104–128 threads the bilayer; that stretch reads KIGYTIGHSVSLISLTTAIVILCMS. Residues 129–135 are Cytoplasmic-facing; it reads RKLHCTR. The chain crosses the membrane as a helical span at residues 136-155; that stretch reads NYIHMHLFVSFILKAIAVFV. The Extracellular portion of the chain corresponds to 156–178; sequence KDAVLYDVIQESDNCSTASVGCK. A glycan (N-linked (GlcNAc...) asparagine) is linked at Asn-169. Cys-177 and Cys-247 are joined by a disulfide. A helical transmembrane segment spans residues 179–202; that stretch reads AVIVFFQYCIMASFFWLLVEGLYL. The Cytoplasmic segment spans residues 203–216; it reads HALLAVSFFSERKY. The helical transmembrane segment at 217-238 threads the bilayer; sequence FWWYILIGWGGPTIFIMAWSFA. The Extracellular segment spans residues 239–256; that stretch reads KAYFNDVGCWDIIENSDL. The chain crosses the membrane as a helical span at residues 257–280; sequence FWWIIKTPILASILMNFILFICII. At 281–305 the chain is on the cytoplasmic side; the sequence is RILRQKINCPDIGRNESNQYSRLAK. The helical transmembrane segment at 306 to 325 threads the bilayer; that stretch reads STLLLIPLFGINFIIFAFIP. Residues 326–337 lie on the Extracellular side of the membrane; that stretch reads ENIKTELRLVFD. Residues 338–357 traverse the membrane as a helical segment; that stretch reads LILGSFQGFVVAVLYCFLNG. At 358-447 the chain is on the cytoplasmic side; sequence EVQAEIKRKW…KGHEDVREVS (90 aa).

This sequence belongs to the G-protein coupled receptor 2 family.

The protein localises to the cell membrane. Its function is as follows. This is a receptor for VIP. The activity of this receptor is mediated by G proteins which activate adenylyl cyclase. This chain is Vasoactive intestinal polypeptide receptor (vipr1), found in Carassius auratus (Goldfish).